We begin with the raw amino-acid sequence, 445 residues long: UPF0210 protein SSA_2018 (445 aa).

Belongs to the UPF0210 family. As to quaternary structure, homodimer.

The sequence is that of UPF0210 protein SSA_2018 from Streptococcus sanguinis (strain SK36).